A 261-amino-acid polypeptide reads, in one-letter code: Glutamate racemase (261 aa).

Substrate is bound by residues 7–8 (DS) and 39–40 (YG). The active-site Proton donor/acceptor is the Cys71. Residue 72 to 73 (NT) coordinates substrate. Cys184 serves as the catalytic Proton donor/acceptor. A substrate-binding site is contributed by 185 to 186 (TH).

This sequence belongs to the aspartate/glutamate racemases family.

It carries out the reaction L-glutamate = D-glutamate. The protein operates within cell wall biogenesis; peptidoglycan biosynthesis. Its function is as follows. Provides the (R)-glutamate required for cell wall biosynthesis. This chain is Glutamate racemase, found in Aliarcobacter butzleri (strain RM4018) (Arcobacter butzleri).